Here is a 165-residue protein sequence, read N- to C-terminus: MKALYPGSFDPLTLGHLDLIERGASLVDELVVAVLQNPGKSPAFSLEQRLRQITASTEHLGNVSVISFDGLTVACAKEQGTRLILRGLRAMSDFEYELQIAHTNRSLAPEFETVFLTTSAHYSFLSSSVVKEVARFGGAVDHMVPRVVAEDLARFFNSAFAPPSR.

Residue S8 participates in substrate binding. ATP contacts are provided by residues 8–9 (SF) and H16. K40, T72, and R86 together coordinate substrate. ATP-binding positions include 87–89 (GLR), E97, and 122–128 (YSFLSSS).

The protein belongs to the bacterial CoaD family. In terms of assembly, homohexamer. The cofactor is Mg(2+).

It is found in the cytoplasm. It catalyses the reaction (R)-4'-phosphopantetheine + ATP + H(+) = 3'-dephospho-CoA + diphosphate. It participates in cofactor biosynthesis; coenzyme A biosynthesis; CoA from (R)-pantothenate: step 4/5. Its function is as follows. Reversibly transfers an adenylyl group from ATP to 4'-phosphopantetheine, yielding dephospho-CoA (dPCoA) and pyrophosphate. The polypeptide is Phosphopantetheine adenylyltransferase (Synechococcus sp. (strain WH7803)).